Reading from the N-terminus, the 165-residue chain is UPF0114 protein ESA_00283 (165 aa).

3 helical membrane-spanning segments follow: residues leucine 15–phenylalanine 35, leucine 53–valine 73, and leucine 136–leucine 156.

Belongs to the UPF0114 family.

It is found in the cell membrane. The sequence is that of UPF0114 protein ESA_00283 from Cronobacter sakazakii (strain ATCC BAA-894) (Enterobacter sakazakii).